Here is a 2527-residue protein sequence, read N- to C-terminus: Leucine-rich repeat serine/threonine-protein kinase 2 (2527 aa).

The tract at residues 1–969 (MASGSCQGCE…RSSKLQSHMR (969 aa)) is required for RAB29-mediated activation. The stretch at 319–348 (LTETIFLNQDLEEKNENQENDDEGEEDKLF) forms a coiled coil. Ser-910, Ser-935, Ser-955, and Ser-973 each carry phosphoserine. LRR repeat units lie at residues 983 to 1004 (YITS…SQKC), 1012 to 1033 (HLEK…LCET), 1036 to 1057 (SLTH…LLKM), 1059 to 1080 (CIAN…DPTV), 1084 to 1105 (TLKQ…LTDV), 1108 to 1129 (KLEQ…LRLK), 1130 to 1150 (ELKI…NFLE), 1156 to 1171 (ESFS…MPFL), 1174 to 1196 (SMTI…LNLP), 1197 to 1218 (HLRS…AHWK), 1221 to 1245 (NLRE…YLWS), 1246 to 1267 (RVEK…IGCL), and 1269 to 1291 (NLTS…MGKL). Residue Ser-1292 is modified to Phosphoserine; by autocatalysis. In terms of domain architecture, Roc spans 1328-1511 (KAVPYNRMKL…KTIINESLNF (184 aa)). 1341–1348 (GNTGSGKT) is a binding site for GTP. Ser-1444 carries the post-translational modification Phosphoserine. A COR domain is found at 1546–1740 (PVIDRKRLLQ…RMYWRQGIYL (195 aa)). The region spanning 1879–2138 (QAPEFLLGDG…FDILNSAELV (260 aa)) is the Protein kinase domain. The ATP site is built by Leu-1885, Asp-1887, Gly-1888, Gly-1891, Val-1893, Ala-1904, Lys-1906, Met-1947, Glu-1948, Ala-1950, Ser-1954, and Arg-1957. Catalysis depends on Asp-1994, which acts as the Proton acceptor. ATP contacts are provided by His-1998, Leu-2001, Ala-2016, and Asp-2017. 2098-2121 (EYGCAPWPMVEKLIKQCLKENPQE) contributes to the GTP binding site. 7 WD repeats span residues 2139–2183 (CLTR…SFLD), 2188–2228 (GYTS…LVIN), 2233–2276 (KKRH…AIFE), 2281–2327 (KLKG…FSFS), 2333–2377 (QKLI…EVWD), 2402–2438 (KESK…LLLD), and 2443–2497 (RLIR…TVWD). 2295-2298 (NVST) provides a ligand contact to GTP.

The protein belongs to the protein kinase superfamily. TKL Ser/Thr protein kinase family. Homodimer. Homotetramer; when activated by GTP-bound RAB29. Interacts with PRKN, PRDX3, and TPCN2. Interacts with VPS35. Interacts (via N-terminus) with RAB29; this interaction is direct and stimulates kinase activity. Interacts (via ROC domain) with SEC16A. Interacts with APP; interaction promotes phosphorylation of 'Thr-743' of APP. Interacts with MAPT. Interacts with RAB8A, RAB10, and RAB12. Interacts (via N-terminus) with RAB32. Interacts with YWHAG; this interaction is dependent on phosphorylation of Ser-910 and either Ser-935 or Ser-1444. Interacts with SFN; this interaction is dependent on phosphorylation of Ser-910 and/or Ser-935. Mg(2+) is required as a cofactor. Post-translationally, autophosphorylated at Ser-1292; autophosphorylation is stimulated by RAB29. Phosphorylation of Ser-910 and either Ser-935 or Ser-1444 facilitates interaction with YWHAG. Phosphorylation of Ser-910 and/or Ser-935 facilitates interaction with SFN. In terms of processing, ubiquitinated by TRIM1; undergoes 'Lys-48'-linked polyubiquitination leading to proteasomal degradation. In terms of tissue distribution, expressed in pyramidal neurons in all cortical laminae of the visual cortex, in neurons of the substantia nigra pars compacta and caudate putamen (at protein level). Expressed in neutrophils (at protein level). Expressed in the brain. Expressed throughout the adult brain, but at a lower level than in heart and liver. Also expressed in placenta, lung, skeletal muscle, kidney and pancreas. In the brain, expressed in the cerebellum, cerebral cortex, medulla, spinal cord occipital pole, frontal lobe, temporal lobe and putamen. Expression is particularly high in brain dopaminoceptive areas.

It localises to the cytoplasmic vesicle. The protein resides in the perikaryon. The protein localises to the golgi apparatus membrane. Its subcellular location is the cell projection. It is found in the axon. It localises to the dendrite. The protein resides in the endoplasmic reticulum membrane. The protein localises to the secretory vesicle. Its subcellular location is the synaptic vesicle membrane. It is found in the endosome. It localises to the lysosome. The protein resides in the mitochondrion outer membrane. The protein localises to the cytoplasm. Its subcellular location is the cytoskeleton. It is found in the phagosome. The catalysed reaction is L-threonyl-[protein] + ATP = O-phospho-L-threonyl-[protein] + ADP + H(+). It carries out the reaction L-seryl-[protein] + ATP = O-phospho-L-seryl-[protein] + ADP + H(+). The enzyme catalyses GTP + H2O = GDP + phosphate + H(+). Kinase activity is regulated by the GTPase activity of the ROC domain. GTP-bound LRRK2 kinase activity is stimulated by RAB29. Phosphorylation of RAB10 'Thr-73' is stimulated by RAB29 and RAB32. Inhibited by small molecule inhibitor MLi-2. Its function is as follows. Serine/threonine-protein kinase which phosphorylates a broad range of proteins involved in multiple processes such as neuronal plasticity, innate immunity, autophagy, and vesicle trafficking. Is a key regulator of RAB GTPases by regulating the GTP/GDP exchange and interaction partners of RABs through phosphorylation. Phosphorylates RAB3A, RAB3B, RAB3C, RAB3D, RAB5A, RAB5B, RAB5C, RAB8A, RAB8B, RAB10, RAB12, RAB29, RAB35, and RAB43. Regulates the RAB3IP-catalyzed GDP/GTP exchange for RAB8A through the phosphorylation of 'Thr-72' on RAB8A. Inhibits the interaction between RAB8A and GDI1 and/or GDI2 by phosphorylating 'Thr-72' on RAB8A. Regulates primary ciliogenesis through phosphorylation of RAB8A and RAB10, which promotes SHH signaling in the brain. Together with RAB29, plays a role in the retrograde trafficking pathway for recycling proteins, such as mannose-6-phosphate receptor (M6PR), between lysosomes and the Golgi apparatus in a retromer-dependent manner. Regulates neuronal process morphology in the intact central nervous system (CNS). Plays a role in synaptic vesicle trafficking. Plays an important role in recruiting SEC16A to endoplasmic reticulum exit sites (ERES) and in regulating ER to Golgi vesicle-mediated transport and ERES organization. Positively regulates autophagy through a calcium-dependent activation of the CaMKK/AMPK signaling pathway. The process involves activation of nicotinic acid adenine dinucleotide phosphate (NAADP) receptors, increase in lysosomal pH, and calcium release from lysosomes. Phosphorylates PRDX3. By phosphorylating APP on 'Thr-743', which promotes the production and the nuclear translocation of the APP intracellular domain (AICD), regulates dopaminergic neuron apoptosis. Acts as a positive regulator of innate immunity by mediating phosphorylation of RIPK2 downstream of NOD1 and NOD2, thereby enhancing RIPK2 activation. Independent of its kinase activity, inhibits the proteasomal degradation of MAPT, thus promoting MAPT oligomerization and secretion. In addition, has GTPase activity via its Roc domain which regulates LRRK2 kinase activity. Recruited by RAB29/RAB7L1 to overloaded lysosomes where it phosphorylates and stabilizes RAB8A and RAB10 which promote lysosomal content release and suppress lysosomal enlargement through the EHBP1 and EHBP1L1 effector proteins. This chain is Leucine-rich repeat serine/threonine-protein kinase 2 (LRRK2), found in Homo sapiens (Human).